We begin with the raw amino-acid sequence, 187 residues long: UPF0340 protein SPP_0683 (187 aa).

Belongs to the UPF0340 family.

This chain is UPF0340 protein SPP_0683, found in Streptococcus pneumoniae (strain P1031).